The sequence spans 112 residues: Mitochondrial import inner membrane translocase subunit TIM14-2 (112 aa).

Residues 7–25 (AGAAVAAAAYAGKYGIEAW) form a helical membrane-spanning segment. The J domain maps to 53 to 112 (EAALILGVRESVAAEKVKEAHRRVMVANHPDAGGSHYLASKINEAKDMMLGKTKNSGSAF).

Belongs to the TIM14 family. In terms of assembly, probable component of the PAM complex at least composed of a mitochondrial HSP70 protein, TIMM44 and TIMM14. The complex interacts with the TIMM23 component of the TIM17:23 complex.

It is found in the mitochondrion. The protein resides in the mitochondrion inner membrane. Component of the PAM complex, a complex required for the translocation of transit peptide-containing proteins from the inner membrane into the mitochondrial matrix in an ATP-dependent manner. This Arabidopsis thaliana (Mouse-ear cress) protein is Mitochondrial import inner membrane translocase subunit TIM14-2 (TIM14-2).